Here is a 311-residue protein sequence, read N- to C-terminus: MALPILLDCDPGHDDAIAIVLALASPELDVKAITSSAGNQTPEKTLRNVLRMLTLLNRTDIPVAGGAVKPLMRELIIADNVHGESGLDGPALPEPAFAPQNCTAVELMAKTLRESAEPVTIVSTGPQTNVALLLNSHPELHSKIARIVIMGGAMGLGNWTPAAEFNIYVDPEAAEIVFQSGIPVVMAGLDVTHKAQIHVEDTERFRAIGNPVSTIVAELLDFFLEYHKDEKWGFVGAPLHDPCTIAWLLKPELFTTVERWVGVETQGKYTQGMTVVDYYYLTGNKPNATVMVDVDRQGFVDLLADRLKFYA.

The active site involves H240.

The protein belongs to the IUNH family. RihA subfamily.

Its function is as follows. Hydrolyzes with equal efficiency cytidine or uridine to ribose and cytosine or uracil, respectively. The polypeptide is Pyrimidine-specific ribonucleoside hydrolase RihA (Escherichia coli O139:H28 (strain E24377A / ETEC)).